The following is a 344-amino-acid chain: MAETKKLLRVLAGEVLDTPPIWMMRQAGRYLPEYRATRAQAGDFLSLCYNPELAAEVTLQPIRRYGFDAAILFADILLVPQALGADLWFETGEGPRLSTIGAQADFDRLKPVDAIHETLSPIYETVRILTRELPSETALIGFAGAPWTVATYMIAGRGTPDQGPAHALREGNPALFDALIARLTAATIEYLSAQIEAGAEVVKIFDSWAGSLKGEAFTKYALEPCREITQALKARHPGIPVIGFPREAGQGYVGFAKATGVDCVALDNSVTPDWAAAHVQVDGCVQGNLASSHMVTGGQALVDETRRIVEAFSKGPHIFNLGHGITPDADPENVQLMIDTVRKG.

Substrate contacts are provided by residues 25–29 (RQAGR), D75, Y152, S207, and H323.

Belongs to the uroporphyrinogen decarboxylase family. As to quaternary structure, homodimer.

It localises to the cytoplasm. It catalyses the reaction uroporphyrinogen III + 4 H(+) = coproporphyrinogen III + 4 CO2. It functions in the pathway porphyrin-containing compound metabolism; protoporphyrin-IX biosynthesis; coproporphyrinogen-III from 5-aminolevulinate: step 4/4. Functionally, catalyzes the decarboxylation of four acetate groups of uroporphyrinogen-III to yield coproporphyrinogen-III. The protein is Uroporphyrinogen decarboxylase of Ruegeria pomeroyi (strain ATCC 700808 / DSM 15171 / DSS-3) (Silicibacter pomeroyi).